Consider the following 188-residue polypeptide: Peptidyl-tRNA hydrolase (188 aa).

Y16 provides a ligand contact to tRNA. The active-site Proton acceptor is the H21. The tRNA site is built by F66, N68, and N114.

Belongs to the PTH family. In terms of assembly, monomer.

It is found in the cytoplasm. It catalyses the reaction an N-acyl-L-alpha-aminoacyl-tRNA + H2O = an N-acyl-L-amino acid + a tRNA + H(+). Functionally, hydrolyzes ribosome-free peptidyl-tRNAs (with 1 or more amino acids incorporated), which drop off the ribosome during protein synthesis, or as a result of ribosome stalling. Catalyzes the release of premature peptidyl moieties from peptidyl-tRNA molecules trapped in stalled 50S ribosomal subunits, and thus maintains levels of free tRNAs and 50S ribosomes. This is Peptidyl-tRNA hydrolase from Citrifermentans bemidjiense (strain ATCC BAA-1014 / DSM 16622 / JCM 12645 / Bem) (Geobacter bemidjiensis).